We begin with the raw amino-acid sequence, 237 residues long: Uridylate kinase (237 aa).

9 to 12 (KLSG) serves as a coordination point for ATP. The involved in allosteric activation by GTP stretch occupies residues 17–22 (GSQGYG). Residue glycine 51 participates in UMP binding. The ATP site is built by glycine 52 and arginine 56. Residues aspartate 71 and 132–139 (CGNPFFTT) contribute to the UMP site. ATP contacts are provided by threonine 159, tyrosine 165, and aspartate 168.

This sequence belongs to the UMP kinase family. As to quaternary structure, homohexamer.

Its subcellular location is the cytoplasm. The catalysed reaction is UMP + ATP = UDP + ADP. It participates in pyrimidine metabolism; CTP biosynthesis via de novo pathway; UDP from UMP (UMPK route): step 1/1. Allosterically activated by GTP. Inhibited by UTP. Catalyzes the reversible phosphorylation of UMP to UDP. This is Uridylate kinase from Synechococcus sp. (strain CC9902).